A 630-amino-acid polypeptide reads, in one-letter code: MAEETQHNKLAAAKKKLKEYWQKNSPRVPAGANRNRKTNGSIPEKATSGGCQPPRDSATGFHREGPTSSATLKDLESPCQERAVVLDSRSVEISQLKNTIKSLKQQKKQVEHQLEEEKKANNKKQKAKRVLEVQIQTLNIQKEELNTDLYHMKRSLRYFEEKSKDLAVRLQHSLQRKGELESVLSNVMATQKKKANQLSSRSKARTEWKLEQSMREEALLKVQLTQLKESFQQVQLERDEYSEHLKGERARWQQRMRKMSQEICTLKKEKQQDMRRVEKLERSLSKLKNQMAEPLPPEPPAVPSEVELQHLRKELERVAGELQAQVKKNQRISLLNQRQEERIQEQEERLRKQEERIQEQHKSLQQLAKPQSVFEEPNNENKNALQLEQQVKELQEKLGEEHLEAASQQNQQLTAQLSLMALPGEGHGEHLDSEGEEAPQPMPSVPEDLESREAMSSFMDHLKEKADLSELVKKELCFIHHWRDRRHQKTHHLLSEPGGCAKDAALGGGHHQAGAQGGDEGEAAGAAADGIAAYSNYNNGHRKFLAAAHNPADEPGPGAPAPQELGAADKHGDLREVSLTSSAQGEAREDPLLDKPTAQPIVQDHKEHPGLGSNCCVPLFCWAWLPRRRR.

The disordered stretch occupies residues Met-1–Glu-76. 2 coiled-coil regions span residues Leu-86–Asp-148 and Leu-224–Gln-411. Over residues Lys-352 to Lys-362 the composition is skewed to basic and acidic residues. Disordered regions lie at residues Lys-352–Asn-379 and Gly-424–Ser-444.

It belongs to the GOLGA8 family.

The polypeptide is Golgin subfamily A member 8K (Homo sapiens (Human)).